Reading from the N-terminus, the 347-residue chain is F-box protein At2g14500 (347 aa).

Residues 6–52 (PLTLSELPHDLLRNIFNRLSFADFHRATWNSISKQTAPPKTKSPWLI) form the F-box domain.

The chain is F-box protein At2g14500 from Arabidopsis thaliana (Mouse-ear cress).